We begin with the raw amino-acid sequence, 237 residues long: Ribosomal RNA large subunit methyltransferase E (237 aa).

The S-adenosyl-L-methionine site is built by G80, W82, D108, D124, and D148. K188 acts as the Proton acceptor in catalysis.

It belongs to the class I-like SAM-binding methyltransferase superfamily. RNA methyltransferase RlmE family.

It localises to the cytoplasm. The enzyme catalyses uridine(2552) in 23S rRNA + S-adenosyl-L-methionine = 2'-O-methyluridine(2552) in 23S rRNA + S-adenosyl-L-homocysteine + H(+). Functionally, specifically methylates the uridine in position 2552 of 23S rRNA at the 2'-O position of the ribose in the fully assembled 50S ribosomal subunit. The chain is Ribosomal RNA large subunit methyltransferase E from Jannaschia sp. (strain CCS1).